We begin with the raw amino-acid sequence, 63 residues long: DNA-directed RNA polymerase 7 kDa subunit (63 aa).

It belongs to the poxviridae DNA-directed RNA polymerase 7 kDa subunit family. The DNA-dependent RNA polymerase used for intermediate and late genes expression consists of eight subunits 147 kDa, 133 kDa, 35 kDa, 30 kDa, 22 kDa, 19 kDa, 18 kDa and 7 kDa totalling more than 500 kDa in mass. The same holoenzyme, with the addition of the transcription-specificity factor RAP94, is used for early gene expression.

It is found in the virion. It catalyses the reaction RNA(n) + a ribonucleoside 5'-triphosphate = RNA(n+1) + diphosphate. In terms of biological role, part of the DNA-dependent RNA polymerase which catalyzes the transcription of viral DNA into RNA using the four ribonucleoside triphosphates as substrates. Responsible for the transcription of early, intermediate and late genes. DNA-dependent RNA polymerase associates with the early transcription factor (ETF) thereby allowing the early genes transcription. Late transcription, and probably also intermediate transcription, require newly synthesized RNA polymerase. The chain is DNA-directed RNA polymerase 7 kDa subunit (RPO7) from Myxoma virus (strain Lausanne) (MYXV).